We begin with the raw amino-acid sequence, 368 residues long: Chaperone protein DnaJ (368 aa).

A J domain is found at 5–75; that stretch reads DFYKILGVEK…TKRKQYDKFG (71 aa). Residues 139–222 form a CR-type zinc finger; the sequence is GKEISQKLTK…CRGKTIVETK (84 aa). C152, C155, C169, C172, C196, C199, C210, and C213 together coordinate Zn(2+). CXXCXGXG motif repeat units follow at residues 152 to 159, 169 to 176, 196 to 203, and 210 to 217; these read CDNCKGSG, CYNCQGRG, CSVCLGSG, and CKKCRGKT.

The protein belongs to the DnaJ family. In terms of assembly, homodimer. It depends on Zn(2+) as a cofactor.

The protein localises to the cytoplasm. Its function is as follows. Participates actively in the response to hyperosmotic and heat shock by preventing the aggregation of stress-denatured proteins and by disaggregating proteins, also in an autonomous, DnaK-independent fashion. Unfolded proteins bind initially to DnaJ; upon interaction with the DnaJ-bound protein, DnaK hydrolyzes its bound ATP, resulting in the formation of a stable complex. GrpE releases ADP from DnaK; ATP binding to DnaK triggers the release of the substrate protein, thus completing the reaction cycle. Several rounds of ATP-dependent interactions between DnaJ, DnaK and GrpE are required for fully efficient folding. Also involved, together with DnaK and GrpE, in the DNA replication of plasmids through activation of initiation proteins. This is Chaperone protein DnaJ from Mesomycoplasma hyopneumoniae (strain 232) (Mycoplasma hyopneumoniae).